The primary structure comprises 125 residues: Large ribosomal subunit protein bL12 (125 aa).

The protein belongs to the bacterial ribosomal protein bL12 family. In terms of assembly, homodimer. Part of the ribosomal stalk of the 50S ribosomal subunit. Forms a multimeric L10(L12)X complex, where L10 forms an elongated spine to which 2 to 4 L12 dimers bind in a sequential fashion. Binds GTP-bound translation factors.

Its function is as follows. Forms part of the ribosomal stalk which helps the ribosome interact with GTP-bound translation factors. Is thus essential for accurate translation. The polypeptide is Large ribosomal subunit protein bL12 (Chlorobium phaeobacteroides (strain DSM 266 / SMG 266 / 2430)).